The primary structure comprises 83 residues: High-potential iron-sulfur protein (83 aa).

Residues Cys-43, Cys-46, Cys-61, and Cys-75 each coordinate [4Fe-4S] cluster.

It belongs to the high-potential iron-sulfur protein (HiPIP) family. As to quaternary structure, homodimer.

Functionally, specific class of high-redox-potential 4Fe-4S ferredoxins. Functions in anaerobic electron transport in most purple and in some other photosynthetic bacteria and in at least one genus (Paracoccus) of halophilic, denitrifying bacteria. The chain is High-potential iron-sulfur protein (hip) from Thermochromatium tepidum (Chromatium tepidum).